Reading from the N-terminus, the 459-residue chain is MGKEKSHINVVVIGHVDSGKSTTTGHLIYKCGGIDKRTIEKFEKEAAELGKGSFKYAWVLDKLKSERERGITIDIALWKFETPKYMVTVIDAPGHRDFIKNMITGTSQADCAILIIAAGTGEFEAGISKDGQTREHALLAYTLGVKQLIVAINKMDTTKWSEARYQEIIKETSGFIKKVGYNPKHVPFVPISGFNGDNMIEVSSNCPWYKGWEKETKAKATGKTLLEAIDAIDPPSRPTDKPLRLPLQDVYKIGGIGTVPVGRVETGTIKGGMVVTFAPAGVTTEVKSVEMHHEQLSEGLPGDNVGFNVKNVSVKEIRRGNVAGDSKNDPPKGCDSFNAQVIVLNHPGQVGAGYAPVLDCHTAHIACKFSELVEKIDRRTGKSVEAAPKFIKSGDAAIVKMVPSKPMCVEAFTDYPPLGRFAVRDMRQTVAVGVIKSVAKSDKQGAGKVTKAAVKAGKK.

G2 is subject to N,N,N-trimethylglycine. K3 carries the post-translational modification N6,N6-dimethyllysine; alternate. K3 bears the N6-methyllysine; alternate mark. The tr-type G domain occupies 5-239; the sequence is KSHINVVVIG…DAIDPPSRPT (235 aa). A G1 region spans residues 14-21; that stretch reads GHVDSGKS. 14–21 contacts GTP; the sequence is GHVDSGKS. K30 bears the N6-methyllysine mark. The interval 70 to 74 is G2; the sequence is GITID. Position 79 is an N6,N6,N6-trimethyllysine (K79). The interval 91–94 is G3; the sequence is DAPG. GTP-binding positions include 91–95 and 153–156; these read DAPGH and NKMD. A G4 region spans residues 153–156; sequence NKMD. The G5 stretch occupies residues 192-194; sequence SGF. N6,N6-dimethyllysine; alternate is present on K315. K315 carries the N6-methyllysine; alternate modification. K389 carries the N6-methyllysine modification.

This sequence belongs to the TRAFAC class translation factor GTPase superfamily. Classic translation factor GTPase family. EF-Tu/EF-1A subfamily.

The protein resides in the cytoplasm. In terms of biological role, this protein promotes the GTP-dependent binding of aminoacyl-tRNA to the A-site of ribosomes during protein biosynthesis. The protein is Elongation factor 1-alpha (TEF1) of Aureobasidium pullulans (Black yeast).